Consider the following 227-residue polypeptide: PKHD-type hydroxylase Bamb_4192 (227 aa).

One can recognise a Fe2OG dioxygenase domain in the interval 78 to 178 (KVFPPLFNRY…RVASFFWIQS (101 aa)). Fe cation contacts are provided by His-96, Asp-98, and His-159. Arg-169 lines the 2-oxoglutarate pocket.

Fe(2+) is required as a cofactor. L-ascorbate serves as cofactor.

In Burkholderia ambifaria (strain ATCC BAA-244 / DSM 16087 / CCUG 44356 / LMG 19182 / AMMD) (Burkholderia cepacia (strain AMMD)), this protein is PKHD-type hydroxylase Bamb_4192.